The chain runs to 138 residues: Basic phospholipase A2 Cll-N6 (138 aa).

An N-terminal signal peptide occupies residues 1–16 (MRTFWIVAVLLVGVEG). Disulfide bonds link C42-C131, C44-C60, C59-C111, C65-C138, C66-C104, C73-C97, and C91-C102. Positions 43, 45, and 47 each coordinate Ca(2+). Residue H63 is part of the active site. D64 is a binding site for Ca(2+). Residue D105 is part of the active site.

Monomer. Requires Ca(2+) as cofactor. Expressed by the venom gland.

It is found in the secreted. It carries out the reaction a 1,2-diacyl-sn-glycero-3-phosphocholine + H2O = a 1-acyl-sn-glycero-3-phosphocholine + a fatty acid + H(+). Functionally, snake venom phospholipase A2 (PLA2) that shows myotoxic activities. PLA2 catalyzes the calcium-dependent hydrolysis of the 2-acyl groups in 3-sn-phosphoglycerides. This is Basic phospholipase A2 Cll-N6 from Crotalus lepidus lepidus (Mottled rock rattlesnake).